Here is a 493-residue protein sequence, read N- to C-terminus: Cysteine--tRNA ligase (493 aa).

Cys-31 contributes to the Zn(2+) binding site. Positions 33 to 43 (PTVYGDAHLGH) match the 'HIGH' region motif. Positions 226, 251, and 255 each coordinate Zn(2+). A 'KMSKS' region motif is present at residues 283–287 (KMGKS). ATP is bound at residue Lys-286.

The protein belongs to the class-I aminoacyl-tRNA synthetase family. As to quaternary structure, monomer. Zn(2+) is required as a cofactor.

It is found in the cytoplasm. The enzyme catalyses tRNA(Cys) + L-cysteine + ATP = L-cysteinyl-tRNA(Cys) + AMP + diphosphate. The chain is Cysteine--tRNA ligase from Bacteroides thetaiotaomicron (strain ATCC 29148 / DSM 2079 / JCM 5827 / CCUG 10774 / NCTC 10582 / VPI-5482 / E50).